Here is a 35-residue protein sequence, read N- to C-terminus: U2-agatoxin-Aop1a (35 aa).

Intrachain disulfides connect cysteine 3-cysteine 19, cysteine 10-cysteine 24, and cysteine 18-cysteine 34. A Leucine amide modification is found at leucine 35.

This sequence belongs to the neurotoxin 01 (U2-agtx) family. Expressed by the venom gland.

It localises to the secreted. Its function is as follows. Insect-selective toxin causing rapid but reversible paralysis in crickets. Suppresses the excitatory postsynaptic potentials evoked in lobster neuromuscular synaptic preparations, possibly by blocking the presynaptic calcium channel (Cav). Induces instantaneous reversible paralysis when injected into crickets. In Allagelena opulenta (Funnel weaving spider), this protein is U2-agatoxin-Aop1a.